The sequence spans 418 residues: Protease LasA (418 aa).

The N-terminal stretch at 1–31 (MQHKRSRAMASPRSPFLFVLLALAVGGTANA) is a signal peptide. Positions 32-236 (HDDGLPAFRY…ARQLQAKAAL (205 aa)) are excised as a propeptide. Zn(2+) is bound by residues histidine 259 and aspartate 272. A disulfide bridge connects residues cysteine 301 and cysteine 347. Catalysis depends on proton donor/acceptor residues histidine 317 and histidine 356. Histidine 358 serves as a coordination point for Zn(2+). Cysteine 391 and cysteine 406 are joined by a disulfide.

The protein belongs to the peptidase M23A family. Zn(2+) is required as a cofactor. In terms of processing, processing of pro-LasA can occur extracellularly and requires elastase (lasB). Secretion and processing may be linked.

It is found in the secreted. Functionally, involved in proteolysis and elastolysis (degradation of the host protein elastin). Has staphylolytic activity (degrades pentaglycine cross-links in cell wall peptidoglycan), preferring Gly-Gly-|-X substrates where X is Ala or Gly. Enhances the elastolytic but not proteolytic activity of elastase (lasB) and elastolytic activity of other proteases. Degradation of host elastin is likely to contribute to the pathogenicity of P.aeruginosa. While either His-317 or His-356 can abstract a proton in the hydrolysis reaction, the same residue performs both functions in a given catalytic cycle, with the other stabilizing the catalytic intermediate. In Pseudomonas aeruginosa (strain ATCC 15692 / DSM 22644 / CIP 104116 / JCM 14847 / LMG 12228 / 1C / PRS 101 / PAO1), this protein is Protease LasA (lasA).